Reading from the N-terminus, the 472-residue chain is Kynureninase 1 (472 aa).

Pyridoxal 5'-phosphate is bound by residues Leu146, Thr147, 174–177 (FPSD), Ser231, Asp260, His263, and Tyr285. N6-(pyridoxal phosphate)lysine is present on Lys286. Positions 326 and 354 each coordinate pyridoxal 5'-phosphate.

It belongs to the kynureninase family. As to quaternary structure, homodimer. Pyridoxal 5'-phosphate serves as cofactor.

The protein localises to the cytoplasm. The catalysed reaction is L-kynurenine + H2O = anthranilate + L-alanine + H(+). The enzyme catalyses 3-hydroxy-L-kynurenine + H2O = 3-hydroxyanthranilate + L-alanine + H(+). Its pathway is amino-acid degradation; L-kynurenine degradation; L-alanine and anthranilate from L-kynurenine: step 1/1. It participates in cofactor biosynthesis; NAD(+) biosynthesis; quinolinate from L-kynurenine: step 2/3. Its function is as follows. Catalyzes the cleavage of L-kynurenine (L-Kyn) and L-3-hydroxykynurenine (L-3OHKyn) into anthranilic acid (AA) and 3-hydroxyanthranilic acid (3-OHAA), respectively. In Aspergillus niger (strain ATCC MYA-4892 / CBS 513.88 / FGSC A1513), this protein is Kynureninase 1 (bna5-1).